We begin with the raw amino-acid sequence, 289 residues long: Aquaporin PIP1-1 (289 aa).

Residues 1 to 36 (MEGKEEDVRLGANRYSERQPIGTAAQGAGDDKDYKE) form a disordered region. The next 2 helical transmembrane spans lie at 58-78 (IAEF…VMGV) and 93-115 (IAWS…SGGH). An NPA 1 motif is present at residues 117–119 (NPA). Helical transmembrane passes span 136-156 (IFYI…VKGF), 178-198 (GDGL…VFSA), and 212-232 (ILAP…TIPI). Residues 238–240 (NPA) carry the NPA 2 motif. A helical transmembrane segment spans residues 260 to 280 (IFWVGPFVGAALAAIYHQVII).

This sequence belongs to the MIP/aquaporin (TC 1.A.8) family. PIP (TC 1.A.8.11) subfamily. In terms of tissue distribution, expressed in roots, leaves and anthers.

It is found in the cell membrane. In terms of biological role, may function as water channel to facilitate the transport of water across cell membrane. In Oryza sativa subsp. japonica (Rice), this protein is Aquaporin PIP1-1 (PIP1-1).